Here is a 332-residue protein sequence, read N- to C-terminus: 2,3-diketo-L-gulonate reductase (332 aa).

Histidine 44 acts as the Proton donor in catalysis. NAD(+) contacts are provided by residues 168–174 (ITMVDMS), 224–225 (WK), and 304–306 (GHE).

This sequence belongs to the LDH2/MDH2 oxidoreductase family. DlgD subfamily. In terms of assembly, homodimer.

The protein resides in the cytoplasm. It catalyses the reaction 3-dehydro-L-gulonate + NAD(+) = 2,3-dioxo-L-gulonate + NADH + H(+). The catalysed reaction is 3-dehydro-L-gulonate + NADP(+) = 2,3-dioxo-L-gulonate + NADPH + H(+). Functionally, catalyzes the reduction of 2,3-diketo-L-gulonate in the presence of NADH, to form 3-keto-L-gulonate. This is 2,3-diketo-L-gulonate reductase from Salmonella typhimurium (strain LT2 / SGSC1412 / ATCC 700720).